The sequence spans 280 residues: PsbP domain-containing protein 7, chloroplastic (280 aa).

Residues 1-36 constitute a chloroplast transit peptide; that stretch reads MSLKPYFSLLYSSPTNVKLSNFLIAQQPSGDLKTTP.

This sequence belongs to the PsbP family.

It localises to the plastid. The protein resides in the chloroplast. The protein is PsbP domain-containing protein 7, chloroplastic (PPD7) of Arabidopsis thaliana (Mouse-ear cress).